Here is a 129-residue protein sequence, read N- to C-terminus: MARKQVSRKRRVKKNVENGVAHIRSTFNNTIVTITDEFGNALSWSSAGALGFKGSKKSTPFAAQMASETASKTAMEHGLKSVEVTVKGPGPGRESAIRALQSAGLEVTAIRDVTPVPHNGCRPPKRRRV.

Belongs to the universal ribosomal protein uS11 family. As to quaternary structure, part of the 30S ribosomal subunit. Interacts with proteins S7 and S18. Binds to IF-3.

In terms of biological role, located on the platform of the 30S subunit, it bridges several disparate RNA helices of the 16S rRNA. Forms part of the Shine-Dalgarno cleft in the 70S ribosome. The protein is Small ribosomal subunit protein uS11 of Staphylococcus carnosus (strain TM300).